We begin with the raw amino-acid sequence, 648 residues long: A-type voltage-gated potassium channel KCND1 (648 aa).

Over 1 to 183 the chain is Cytoplasmic; that stretch reads MAAGVATWLP…RAFENPHTST (183 aa). The tract at residues 2–20 is interaction with KCNIP1, KCNIP2, and other family members; it reads AAGVATWLPFARAAAVGWL. Positions 2–20 are interaction with KCNIP2; the sequence is AAGVATWLPFARAAAVGWL. Zn(2+) contacts are provided by H104, C131, and C132. Residues 144–164 are disordered; it reads AERLAEDEEAEQAGDGPTLPA. Residues 184–205 traverse the membrane as a helical segment; sequence AALVFYYVTGFFIAVSVIANVV. Residues 206–230 lie on the Extracellular side of the membrane; the sequence is ETIPCRSPTRRPPREQPCGDRFPLA. The chain crosses the membrane as a helical span at residues 231–252; sequence FFCMDTACVLIFTGEYLLRLFA. The Cytoplasmic segment spans residues 253-263; the sequence is APSRCRFLRSV. The chain crosses the membrane as a helical span at residues 264 to 284; the sequence is MSLIDVVAILPYYIGLFMPKN. Over 285–287 the chain is Extracellular; the sequence is EDV. A helical; Voltage-sensor membrane pass occupies residues 288-308; sequence SGAFVTLRVFRVFRIFKFSRH. The Cytoplasmic portion of the chain corresponds to 309 to 323; the sequence is SQGLRILGYTLKSCA. Positions 310-323 are S4-S5 linker; the sequence is QGLRILGYTLKSCA. The chain crosses the membrane as a helical span at residues 324 to 345; sequence SELGFLLFSLTMAIIIFATVMF. Residues 346–359 lie on the Extracellular side of the membrane; sequence YAEKGTNKTNFTSI. Residues N352 and N355 are each glycosylated (N-linked (GlcNAc...) asparagine). The helical intramembrane region spans 360 to 371; sequence PAAFWYTIVTMT. The short motif at 372 to 377 is the Selectivity filter element; that stretch reads TLGYGD. The stretch at 372 to 379 is an intramembrane region; it reads TLGYGDMV. At 380 to 386 the chain is on the extracellular side; sequence PSTIAGK. The helical transmembrane segment at 387-415 threads the bilayer; it reads IFGSICSLSGVLVIALPVPVIVSNFSRIY. The Cytoplasmic segment spans residues 416 to 648; that stretch reads HQNQRADKRR…LPETVKISSL (233 aa). The residue at position 458 (S458) is a Phosphoserine. A mediates dendritic targeting region spans residues 474 to 489; sequence FEQQHHHLLHCLEKTT. The required for dendritic targeting stretch occupies residues 474–489; sequence FEQQHHHLLHCLEKTT. A Phosphoserine modification is found at S555. Residues 601-636 are disordered; sequence IPTPPANTPDESQPSSPGGGGGGASSTLRNSSLGTP.

It belongs to the potassium channel family. D (Shal) (TC 1.A.1.2) subfamily. Kv4.1/KCND1 sub-subfamily. As to quaternary structure, component of heteromultimeric potassium channels. Identified in potassium channel complexes containing KCND1, KCND2, KCND3, KCNIP1, KCNIP2, KCNIP3, KCNIP4, DPP6 and DPP10.

The protein localises to the cell membrane. The catalysed reaction is K(+)(in) = K(+)(out). Its function is as follows. A-type voltage-gated potassium channel that mediates transmembrane potassium transport in excitable membranes in the brain. Mediates A-type current I(SA) in suprachiasmatic nucleus (SCN) neurons. Exhibits a low-threshold A-type current with a hyperpolarized steady-state inactivation midpoint and the recovery process was steeply voltage-dependent, with recovery being markedly faster at more negative potentials. May regulates repetitive firing rates in the suprachiasmatic nucleus (SCN) neurons and circadian rhythms in neuronal excitability and behavior. Contributes to the regulation of the circadian rhythm of action potential firing in suprachiasmatic nucleus neurons, which regulates the circadian rhythm of locomotor activity. The regulatory subunit KCNIP1 modulates the kinetics of channel inactivation, increases the current amplitudes and accelerates recovery from inactivation, shifts activation in a depolarizing direction. The regulatory subunit DPP10 decreases the voltage sensitivity of the inactivation channel gating. This is A-type voltage-gated potassium channel KCND1 from Bos taurus (Bovine).